Here is a 274-residue protein sequence, read N- to C-terminus: 4-diphosphocytidyl-2-C-methyl-D-erythritol kinase (274 aa).

K10 is an active-site residue. ATP is bound at residue 101 to 111 (PTQAGLGGGSA). D143 is a catalytic residue.

Belongs to the GHMP kinase family. IspE subfamily.

It catalyses the reaction 4-CDP-2-C-methyl-D-erythritol + ATP = 4-CDP-2-C-methyl-D-erythritol 2-phosphate + ADP + H(+). Its pathway is isoprenoid biosynthesis; isopentenyl diphosphate biosynthesis via DXP pathway; isopentenyl diphosphate from 1-deoxy-D-xylulose 5-phosphate: step 3/6. Its function is as follows. Catalyzes the phosphorylation of the position 2 hydroxy group of 4-diphosphocytidyl-2C-methyl-D-erythritol. The protein is 4-diphosphocytidyl-2-C-methyl-D-erythritol kinase of Helicobacter pylori (strain HPAG1).